Reading from the N-terminus, the 473-residue chain is Serine palmitoyltransferase 1 (473 aa).

Residues 1–66 (MATATEQWVL…KEELIEEWQP (66 aa)) form an interaction with SPTLC2 region. Residues 16-36 (ALYEAPAYHLILEGILILWII) traverse the membrane as a helical segment. Tyr164 carries the post-translational modification Phosphotyrosine; by ABL.

Belongs to the class-II pyridoxal-phosphate-dependent aminotransferase family. Component of the serine palmitoyltransferase (SPT) complex, which is also composed of SPTLC2 or SPTLC3 and SPTSSA or SPTSSB. The heterodimer with SPTLC2 or SPTLC3 forms the catalytic core of the enzyme, while SPTSSA or SPTSSB subunits determine substrate specificity. SPT also interacts with ORMDL proteins, especially ORMDL3, which negatively regulate SPT activity in the presence of ceramides. Forms dimers of heterodimers with SPTLC2. Interacts with RTN4. Pyridoxal 5'-phosphate serves as cofactor. Phosphorylation at Tyr-164 inhibits activity and promotes cell survival.

It localises to the endoplasmic reticulum membrane. It carries out the reaction L-serine + hexadecanoyl-CoA + H(+) = 3-oxosphinganine + CO2 + CoA. The catalysed reaction is octadecanoyl-CoA + L-serine + H(+) = 3-oxoeicosasphinganine + CO2 + CoA. It catalyses the reaction tetradecanoyl-CoA + L-serine + H(+) = 3-oxohexadecasphinganine + CO2 + CoA. The enzyme catalyses dodecanoyl-CoA + L-serine + H(+) = 3-oxotetradecasphinganine + CO2 + CoA. It participates in lipid metabolism; sphingolipid metabolism. SPT complex catalytic activity is negatively regulated by ORMDL proteins, including ORMDL3, in the presence of ceramides. This mechanism allows to maintain ceramide levels at sufficient concentrations for the production of complex sphingolipids, but which prevents the accumulation of ceramides to levels that trigger apoptosis. Component of the serine palmitoyltransferase multisubunit enzyme (SPT) that catalyzes the initial and rate-limiting step in sphingolipid biosynthesis by condensing L-serine and activated acyl-CoA (most commonly palmitoyl-CoA) to form long-chain bases. The SPT complex is also composed of SPTLC2 or SPTLC3 and SPTSSA or SPTSSB. Within this complex, the heterodimer with SPTLC2 or SPTLC3 forms the catalytic core. The composition of the serine palmitoyltransferase (SPT) complex determines the substrate preference. The SPTLC1-SPTLC2-SPTSSA complex shows a strong preference for C16-CoA substrate, while the SPTLC1-SPTLC3-SPTSSA isozyme uses both C14-CoA and C16-CoA as substrates, with a slight preference for C14-CoA. The SPTLC1-SPTLC2-SPTSSB complex shows a strong preference for C18-CoA substrate, while the SPTLC1-SPTLC3-SPTSSB isozyme displays an ability to use a broader range of acyl-CoAs, without apparent preference. Required for adipocyte cell viability and metabolic homeostasis. The chain is Serine palmitoyltransferase 1 (SPTLC1) from Pongo abelii (Sumatran orangutan).